The following is a 392-amino-acid chain: Chalcone synthase (392 aa).

Residue C165 is part of the active site.

It belongs to the thiolase-like superfamily. Chalcone/stilbene synthases family.

It catalyses the reaction (E)-4-coumaroyl-CoA + 3 malonyl-CoA + 3 H(+) = 2',4,4',6'-tetrahydroxychalcone + 3 CO2 + 4 CoA. The protein operates within secondary metabolite biosynthesis; flavonoid biosynthesis. In terms of biological role, the primary product of this enzyme is 4,2',4',6'-tetrahydroxychalcone (also termed naringenin-chalcone or chalcone) which can under specific conditions spontaneously isomerize into naringenin. The protein is Chalcone synthase (CHS) of Persea americana (Avocado).